The sequence spans 108 residues: UPF0060 membrane protein CC_1976 (108 aa).

4 helical membrane passes run 4–24 (FAIYVLAALAEIAGCFGFWAW), 27–47 (LGKSPAWAVLGVLSLVIFALL), 59–79 (AFAAYGGVYIIASLAWMQVVE), and 85–105 (RWDLIGGVICLAGAALILFGP).

Belongs to the UPF0060 family.

It localises to the cell inner membrane. In Caulobacter vibrioides (strain ATCC 19089 / CIP 103742 / CB 15) (Caulobacter crescentus), this protein is UPF0060 membrane protein CC_1976.